Consider the following 376-residue polypeptide: Succinyl-diaminopimelate desuccinylase (376 aa).

Histidine 66 contacts Zn(2+). Residue aspartate 68 is part of the active site. Aspartate 99 contributes to the Zn(2+) binding site. Glutamate 133 (proton acceptor) is an active-site residue. 3 residues coordinate Zn(2+): glutamate 134, glutamate 162, and histidine 348.

The protein belongs to the peptidase M20A family. DapE subfamily. Homodimer. The cofactor is Zn(2+). It depends on Co(2+) as a cofactor.

It catalyses the reaction N-succinyl-(2S,6S)-2,6-diaminopimelate + H2O = (2S,6S)-2,6-diaminopimelate + succinate. The protein operates within amino-acid biosynthesis; L-lysine biosynthesis via DAP pathway; LL-2,6-diaminopimelate from (S)-tetrahydrodipicolinate (succinylase route): step 3/3. Functionally, catalyzes the hydrolysis of N-succinyl-L,L-diaminopimelic acid (SDAP), forming succinate and LL-2,6-diaminopimelate (DAP), an intermediate involved in the bacterial biosynthesis of lysine and meso-diaminopimelic acid, an essential component of bacterial cell walls. The chain is Succinyl-diaminopimelate desuccinylase from Xanthomonas oryzae pv. oryzae (strain MAFF 311018).